Consider the following 600-residue polypeptide: Autophagy-related protein 22-2 (600 aa).

The segment at 1 to 30 (MAFASPPASPPDEDGQARAPRYPGEDTTPT) is disordered. 4 helical membrane passes run 41–61 (YGIA…PLTL), 117–137 (SFAM…LISF), 149–168 (TLLV…FVFI), and 186–206 (CLGS…ASDP). A disordered region spans residues 234 to 257 (SFDGDEPTHRPPTGLGLGGATGTS). 4 helical membrane passes run 271 to 291 (GVGL…LLLF), 304 to 324 (TLPL…FTMV), 378 to 398 (VIVF…VSGT), and 414 to 434 (VALL…LWPI). The N-linked (GlcNAc...) asparagine glycan is linked to Asn444. 4 helical membrane passes run 449-469 (VCIA…IPLF), 484-506 (YPLA…SFFG), 526-546 (KGSS…TGQV), and 549-569 (GFFF…MVDA).

This sequence belongs to the ATG22 family.

It is found in the vacuole membrane. Vacuolar effluxer which mediate the efflux of amino acids resulting from autophagic degradation. The release of autophagic amino acids allows the maintenance of protein synthesis and viability during nitrogen starvation. This Aspergillus niger (strain ATCC MYA-4892 / CBS 513.88 / FGSC A1513) protein is Autophagy-related protein 22-2 (atg22-2).